A 395-amino-acid chain; its full sequence is Nicotinate phosphoribosyltransferase (395 aa).

At histidine 222 the chain carries Phosphohistidine; by autocatalysis.

This sequence belongs to the NAPRTase family. In terms of processing, transiently phosphorylated on a His residue during the reaction cycle. Phosphorylation strongly increases the affinity for substrates and increases the rate of nicotinate D-ribonucleotide production. Dephosphorylation regenerates the low-affinity form of the enzyme, leading to product release.

The enzyme catalyses nicotinate + 5-phospho-alpha-D-ribose 1-diphosphate + ATP + H2O = nicotinate beta-D-ribonucleotide + ADP + phosphate + diphosphate. The protein operates within cofactor biosynthesis; NAD(+) biosynthesis; nicotinate D-ribonucleotide from nicotinate: step 1/1. Functionally, catalyzes the synthesis of beta-nicotinate D-ribonucleotide from nicotinate and 5-phospho-D-ribose 1-phosphate at the expense of ATP. The polypeptide is Nicotinate phosphoribosyltransferase (Polaromonas sp. (strain JS666 / ATCC BAA-500)).